A 276-amino-acid polypeptide reads, in one-letter code: Orotidine 5'-phosphate decarboxylase (276 aa).

The active-site Proton donor is the K93.

The protein belongs to the OMP decarboxylase family. Type 2 subfamily.

It catalyses the reaction orotidine 5'-phosphate + H(+) = UMP + CO2. It functions in the pathway pyrimidine metabolism; UMP biosynthesis via de novo pathway; UMP from orotate: step 2/2. The chain is Orotidine 5'-phosphate decarboxylase from Halorubrum lacusprofundi (strain ATCC 49239 / DSM 5036 / JCM 8891 / ACAM 34).